The sequence spans 206 residues: 2,3-bisphosphoglycerate-dependent phosphoglycerate mutase (206 aa).

Substrate is bound by residues 9-16 (RHGQSEWN), 22-23 (TG), Arg-61, 88-91 (ERDY), Lys-99, 115-116 (RR), and 159-160 (GN). The active-site Tele-phosphohistidine intermediate is His-10. Catalysis depends on Glu-88, which acts as the Proton donor/acceptor.

Belongs to the phosphoglycerate mutase family. BPG-dependent PGAM subfamily. Homodimer.

The catalysed reaction is (2R)-2-phosphoglycerate = (2R)-3-phosphoglycerate. Its pathway is carbohydrate degradation; glycolysis; pyruvate from D-glyceraldehyde 3-phosphate: step 3/5. Its function is as follows. Catalyzes the interconversion of 2-phosphoglycerate and 3-phosphoglycerate. The polypeptide is 2,3-bisphosphoglycerate-dependent phosphoglycerate mutase (Methylocella silvestris (strain DSM 15510 / CIP 108128 / LMG 27833 / NCIMB 13906 / BL2)).